We begin with the raw amino-acid sequence, 299 residues long: ATP phosphoribosyltransferase (299 aa).

This sequence belongs to the ATP phosphoribosyltransferase family. Long subfamily. In terms of assembly, equilibrium between an active dimeric form, an inactive hexameric form and higher aggregates. Interconversion between the various forms is largely reversible and is influenced by the natural substrates and inhibitors of the enzyme. Mg(2+) serves as cofactor.

The protein resides in the cytoplasm. The enzyme catalyses 1-(5-phospho-beta-D-ribosyl)-ATP + diphosphate = 5-phospho-alpha-D-ribose 1-diphosphate + ATP. Its pathway is amino-acid biosynthesis; L-histidine biosynthesis; L-histidine from 5-phospho-alpha-D-ribose 1-diphosphate: step 1/9. Feedback inhibited by histidine. Catalyzes the condensation of ATP and 5-phosphoribose 1-diphosphate to form N'-(5'-phosphoribosyl)-ATP (PR-ATP). Has a crucial role in the pathway because the rate of histidine biosynthesis seems to be controlled primarily by regulation of HisG enzymatic activity. The polypeptide is ATP phosphoribosyltransferase (Buchnera aphidicola subsp. Melaphis rhois).